Consider the following 106-residue polypeptide: Large ribosomal subunit protein eL42 (106 aa).

The disordered stretch occupies residues 34 to 53; that stretch reads YAQGRRRYDRKRSGYGGQTK. N6-methyllysine is present on K53.

This sequence belongs to the eukaryotic ribosomal protein eL42 family.

Its subcellular location is the cytoplasm. This chain is Large ribosomal subunit protein eL42 (RPL36AL), found in Pongo abelii (Sumatran orangutan).